The sequence spans 257 residues: GTP cyclohydrolase FolE2 (257 aa).

It belongs to the GTP cyclohydrolase IV family.

It carries out the reaction GTP + H2O = 7,8-dihydroneopterin 3'-triphosphate + formate + H(+). The protein operates within cofactor biosynthesis; 7,8-dihydroneopterin triphosphate biosynthesis; 7,8-dihydroneopterin triphosphate from GTP: step 1/1. In terms of biological role, converts GTP to 7,8-dihydroneopterin triphosphate. The chain is GTP cyclohydrolase FolE2 from Kosmotoga olearia (strain ATCC BAA-1733 / DSM 21960 / TBF 19.5.1).